Here is a 293-residue protein sequence, read N- to C-terminus: Undecaprenyl-diphosphatase (293 aa).

The next 5 helical transmembrane spans lie at 107-127 (WMIIVATIPVVVLGVLGKDLI), 134-154 (MWITATVLVLFSFVFILAEKV), 207-227 (FSFLLAIPAVLGSGLYSLPDA), 243-263 (IGTLVAFLVGYASIAWLMKFV), and 268-288 (FSWFAAYRIPAGLLVMLLLWL).

This sequence belongs to the UppP family.

The protein localises to the cell membrane. The enzyme catalyses di-trans,octa-cis-undecaprenyl diphosphate + H2O = di-trans,octa-cis-undecaprenyl phosphate + phosphate + H(+). Its function is as follows. Catalyzes the dephosphorylation of undecaprenyl diphosphate (UPP). Confers resistance to bacitracin. The chain is Undecaprenyl-diphosphatase from Corynebacterium efficiens (strain DSM 44549 / YS-314 / AJ 12310 / JCM 11189 / NBRC 100395).